A 115-amino-acid chain; its full sequence is Large ribosomal subunit protein bL19 (115 aa).

The protein belongs to the bacterial ribosomal protein bL19 family.

In terms of biological role, this protein is located at the 30S-50S ribosomal subunit interface and may play a role in the structure and function of the aminoacyl-tRNA binding site. The polypeptide is Large ribosomal subunit protein bL19 (Desulforudis audaxviator (strain MP104C)).